A 282-amino-acid polypeptide reads, in one-letter code: Probable iron transport system membrane protein HI_0360 (282 aa).

8 helical membrane-spanning segments follow: residues 17 to 37, 63 to 83, 93 to 113, 140 to 160, 164 to 184, 186 to 206, 223 to 243, and 245 to 265; these read AMIL…YLML, LPYA…ILWI, AVIG…VSLN, IIIG…LLIF, TQAI…FTLL, ACVV…MVVT, IIAI…SYYL, and GATG…AFLF.

This sequence belongs to the ABC-3 integral membrane protein family.

It localises to the cell inner membrane. Functionally, part of an ATP-driven transport system HI_0359/HI_0360/HI_0361/HI_0362 for iron. In Haemophilus influenzae (strain ATCC 51907 / DSM 11121 / KW20 / Rd), this protein is Probable iron transport system membrane protein HI_0360.